Consider the following 570-residue polypeptide: Dihydroxy-acid dehydratase (570 aa).

Cysteine 61 contributes to the [2Fe-2S] cluster binding site. Aspartate 94 is a binding site for Mg(2+). Cysteine 135 lines the [2Fe-2S] cluster pocket. Residues aspartate 136 and lysine 137 each contribute to the Mg(2+) site. Lysine 137 bears the N6-carboxylysine mark. Position 207 (cysteine 207) interacts with [2Fe-2S] cluster. A Mg(2+)-binding site is contributed by glutamate 459. Serine 485 serves as the catalytic Proton acceptor.

The protein belongs to the IlvD/Edd family. Homodimer. [2Fe-2S] cluster serves as cofactor. Mg(2+) is required as a cofactor.

It catalyses the reaction (2R)-2,3-dihydroxy-3-methylbutanoate = 3-methyl-2-oxobutanoate + H2O. The enzyme catalyses (2R,3R)-2,3-dihydroxy-3-methylpentanoate = (S)-3-methyl-2-oxopentanoate + H2O. It participates in amino-acid biosynthesis; L-isoleucine biosynthesis; L-isoleucine from 2-oxobutanoate: step 3/4. It functions in the pathway amino-acid biosynthesis; L-valine biosynthesis; L-valine from pyruvate: step 3/4. Functionally, functions in the biosynthesis of branched-chain amino acids. Catalyzes the dehydration of (2R,3R)-2,3-dihydroxy-3-methylpentanoate (2,3-dihydroxy-3-methylvalerate) into 2-oxo-3-methylpentanoate (2-oxo-3-methylvalerate) and of (2R)-2,3-dihydroxy-3-methylbutanoate (2,3-dihydroxyisovalerate) into 2-oxo-3-methylbutanoate (2-oxoisovalerate), the penultimate precursor to L-isoleucine and L-valine, respectively. This is Dihydroxy-acid dehydratase from Lactococcus lactis subsp. cremoris (strain MG1363).